Here is a 489-residue protein sequence, read N- to C-terminus: Protein SOF1 (489 aa).

WD repeat units lie at residues 65 to 105, 113 to 158, 177 to 214, 217 to 257, 259 to 299, 303 to 342, and 346 to 385; these read GHRD…EFVS, VTGL…YSNK, DGES…PVSD, WGAD…PTQK, VQTM…RSLN, DHVS…SREI, and KRMQ…RSNV. Basic and acidic residues-rich tracts occupy residues 440-459 and 466-489; these read REAN…ERKK and HKYE…TQEK. The interval 440 to 489 is disordered; that stretch reads REANERRTRKDMPYISERKKQIVGTVHKYEDSGRDRKRRKEDDKRDTQEK.

The protein belongs to the WD repeat DCAF13/WDSOF1 family. Interacts with snoRNA U3. Interacts with NOP1 and MPP10. Component of the ribosomal small subunit (SSU) processome composed of at least 40 protein subunits and snoRNA U3.

The protein resides in the nucleus. It is found in the nucleolus. Functionally, required for ribosomal RNA processing. In Saccharomyces cerevisiae (strain ATCC 204508 / S288c) (Baker's yeast), this protein is Protein SOF1 (SOF1).